The following is a 132-amino-acid chain: Fumarate reductase subunit C (132 aa).

Transmembrane regions (helical) follow at residues 30–50, 70–90, and 110–130; these read ATSVFAVWFCIVLLYGVLCFA, IVVFLNIITLIATLYHTVTYF, and VVRNALWAVTALVSVIALVLV.

It belongs to the FrdC family. In terms of assembly, part of an enzyme complex containing four subunits: a flavoprotein (FrdA), an iron-sulfur protein (FrdB), and two hydrophobic anchor proteins (FrdC and FrdD).

Its subcellular location is the cell inner membrane. Its function is as follows. Anchors the catalytic components of the fumarate reductase complex to the cell membrane, binds quinones. This Haemophilus influenzae (strain ATCC 51907 / DSM 11121 / KW20 / Rd) protein is Fumarate reductase subunit C.